The primary structure comprises 305 residues: Protoheme IX farnesyltransferase (305 aa).

9 helical membrane passes run Phe-38–Gly-58, Leu-60–Ile-80, Ala-110–Val-130, Thr-131–Ser-151, Ile-161–Ile-181, Ala-185–Ile-205, Val-227–Gly-247, Leu-249–Leu-269, and Phe-285–Phe-305.

Belongs to the UbiA prenyltransferase family. Protoheme IX farnesyltransferase subfamily. As to quaternary structure, interacts with CtaA.

It is found in the cell membrane. The enzyme catalyses heme b + (2E,6E)-farnesyl diphosphate + H2O = Fe(II)-heme o + diphosphate. The protein operates within porphyrin-containing compound metabolism; heme O biosynthesis; heme O from protoheme: step 1/1. Its function is as follows. Converts heme B (protoheme IX) to heme O by substitution of the vinyl group on carbon 2 of heme B porphyrin ring with a hydroxyethyl farnesyl side group. The polypeptide is Protoheme IX farnesyltransferase (Bacillus pumilus (strain SAFR-032)).